A 132-amino-acid chain; its full sequence is Phosphoribosyl-AMP cyclohydrolase (132 aa).

Asp78 serves as a coordination point for Mg(2+). Position 79 (Cys79) interacts with Zn(2+). 2 residues coordinate Mg(2+): Asp80 and Asp82. Zn(2+) is bound by residues Cys96 and Cys103.

The protein belongs to the PRA-CH family. Homodimer. It depends on Mg(2+) as a cofactor. Zn(2+) is required as a cofactor.

It localises to the cytoplasm. It carries out the reaction 1-(5-phospho-beta-D-ribosyl)-5'-AMP + H2O = 1-(5-phospho-beta-D-ribosyl)-5-[(5-phospho-beta-D-ribosylamino)methylideneamino]imidazole-4-carboxamide. It participates in amino-acid biosynthesis; L-histidine biosynthesis; L-histidine from 5-phospho-alpha-D-ribose 1-diphosphate: step 3/9. Its function is as follows. Catalyzes the hydrolysis of the adenine ring of phosphoribosyl-AMP. This chain is Phosphoribosyl-AMP cyclohydrolase, found in Nitrosococcus oceani (strain ATCC 19707 / BCRC 17464 / JCM 30415 / NCIMB 11848 / C-107).